The following is a 247-amino-acid chain: Reticulon-like protein B8 (247 aa).

Residues 61–247 (SADVLLWRNK…SGKFGLKKRE (187 aa)) enclose the Reticulon domain. Helical transmembrane passes span 71–91 (KISA…EWIN), 92–112 (FHFL…QFVW), and 166–186 (FLMA…CNFL).

It is found in the endoplasmic reticulum membrane. This chain is Reticulon-like protein B8 (RTNLB8), found in Arabidopsis thaliana (Mouse-ear cress).